Consider the following 368-residue polypeptide: UPF0284 protein Cyan7425_0342 (368 aa).

This sequence belongs to the UPF0284 family.

The sequence is that of UPF0284 protein Cyan7425_0342 from Cyanothece sp. (strain PCC 7425 / ATCC 29141).